A 295-amino-acid polypeptide reads, in one-letter code: MTNVTGTERVKRGMAEMQKGGVIMDVVNAEQARIAEEAGAVAVMALERVPADIRAAGGVSRMADPTIVEEVMGAVSIPVMAKCRIGHLVEARVLESLGVDYIDESEVLTPADEVYHLNKRDYTVPFVCGCRDIGEAARRIAEGAAMLRTKGEPGTGNIVEAVRHMRQVNAEIRQVASLREDELMTYAKNTGAPYEVLLEIKRLGRLPVVNFAAGGVATPADAALMMQLGADGVFVGSGIFKSENPEKFARAIVEATTHYEDYELIASLSKGLGNAMKGIEISTLLPEQRMQERGW.

Asp-25 contacts D-ribose 5-phosphate. The active-site Schiff-base intermediate with D-ribose 5-phosphate is the Lys-82. Gly-154 serves as a coordination point for D-ribose 5-phosphate. Residue Arg-166 participates in D-glyceraldehyde 3-phosphate binding. D-ribose 5-phosphate-binding positions include Gly-215 and 236–237; that span reads GS.

The protein belongs to the PdxS/SNZ family. In terms of assembly, in the presence of PdxT, forms a dodecamer of heterodimers.

It carries out the reaction aldehydo-D-ribose 5-phosphate + D-glyceraldehyde 3-phosphate + L-glutamine = pyridoxal 5'-phosphate + L-glutamate + phosphate + 3 H2O + H(+). Its pathway is cofactor biosynthesis; pyridoxal 5'-phosphate biosynthesis. Its function is as follows. Catalyzes the formation of pyridoxal 5'-phosphate from ribose 5-phosphate (RBP), glyceraldehyde 3-phosphate (G3P) and ammonia. The ammonia is provided by the PdxT subunit. Can also use ribulose 5-phosphate and dihydroxyacetone phosphate as substrates, resulting from enzyme-catalyzed isomerization of RBP and G3P, respectively. The polypeptide is Pyridoxal 5'-phosphate synthase subunit PdxS (Bacillus mycoides (strain KBAB4) (Bacillus weihenstephanensis)).